Consider the following 905-residue polypeptide: Alanine--tRNA ligase (905 aa).

Zn(2+) contacts are provided by His-595, His-599, Cys-696, and His-700.

Belongs to the class-II aminoacyl-tRNA synthetase family. It depends on Zn(2+) as a cofactor.

Its subcellular location is the cytoplasm. It catalyses the reaction tRNA(Ala) + L-alanine + ATP = L-alanyl-tRNA(Ala) + AMP + diphosphate. Its function is as follows. Catalyzes the attachment of alanine to tRNA(Ala) in a two-step reaction: alanine is first activated by ATP to form Ala-AMP and then transferred to the acceptor end of tRNA(Ala). Also edits incorrectly charged Ser-tRNA(Ala) and Gly-tRNA(Ala) via its editing domain. The polypeptide is Alanine--tRNA ligase (Anaeromyxobacter dehalogenans (strain 2CP-C)).